A 374-amino-acid polypeptide reads, in one-letter code: Isopentenyl-diphosphate delta-isomerase (374 aa).

Substrate is bound at residue 13–14 (RK). Residues 71 to 73 (GMT), Ser104, and Asn132 each bind FMN. 104 to 106 (SQR) contributes to the substrate binding site. Gln171 is a binding site for substrate. A Mg(2+)-binding site is contributed by Glu172. FMN-binding positions include Lys203, Thr233, 282–284 (GMR), and 303–304 (AL).

The protein belongs to the IPP isomerase type 2 family. In terms of assembly, homooctamer. Dimer of tetramers. The cofactor is FMN. NADPH serves as cofactor. Mg(2+) is required as a cofactor.

It is found in the cytoplasm. It catalyses the reaction isopentenyl diphosphate = dimethylallyl diphosphate. Functionally, involved in the biosynthesis of isoprenoids. Catalyzes the 1,3-allylic rearrangement of the homoallylic substrate isopentenyl (IPP) to its allylic isomer, dimethylallyl diphosphate (DMAPP). The sequence is that of Isopentenyl-diphosphate delta-isomerase from Thermococcus onnurineus (strain NA1).